We begin with the raw amino-acid sequence, 141 residues long: MLTADDKKLISQIWTKVAEHGGEFGGEALERMFITYPQTKTYFPHFDLHVGSEQVRGHGKKVVNALSNAVKNLDNLSQALAELSNLHAYNLRVDPVNFKLLSQCFQVVLAVHLGKEYTPEVHAAYDKFLSAVASVLAEKYR.

A Globin domain is found at 1-141; that stretch reads MLTADDKKLI…VASVLAEKYR (141 aa). Residues histidine 58 and histidine 87 each contribute to the heme b site.

The protein belongs to the globin family. As to quaternary structure, heterotetramer of two alpha-D chains and two beta chains. Red blood cells.

In terms of biological role, involved in oxygen transport from the lung to the various peripheral tissues. The sequence is that of Hemoglobin subunit alpha-D (HBAD) from Rhea americana (Greater rhea).